The primary structure comprises 216 residues: Putative germin-like protein 2-1 (216 aa).

The N-terminal stretch at methionine 1–alanine 21 is a signal peptide. Cysteine 31 and cysteine 46 form a disulfide bridge. Residues serine 60–aspartate 210 form the Cupin type-1 domain. The N-linked (GlcNAc...) asparagine glycan is linked to asparagine 67. 4 residues coordinate Mn(2+): histidine 108, histidine 110, glutamate 115, and histidine 156.

This sequence belongs to the germin family. Oligomer (believed to be a pentamer but probably hexamer).

The protein resides in the secreted. The protein localises to the extracellular space. It is found in the apoplast. Its function is as follows. May play a role in plant defense. Probably has no oxalate oxidase activity even if the active site is conserved. The protein is Putative germin-like protein 2-1 of Oryza sativa subsp. japonica (Rice).